The sequence spans 226 residues: Orotidine 5'-phosphate decarboxylase (226 aa).

Residues Asp-8, Lys-30, Asp-58–Thr-67, Thr-117, Arg-177, Gln-186, Gly-206, and Arg-207 contribute to the substrate site. Lys-60 (proton donor) is an active-site residue.

This sequence belongs to the OMP decarboxylase family. Type 1 subfamily. In terms of assembly, homodimer.

It catalyses the reaction orotidine 5'-phosphate + H(+) = UMP + CO2. It participates in pyrimidine metabolism; UMP biosynthesis via de novo pathway; UMP from orotate: step 2/2. Functionally, catalyzes the decarboxylation of orotidine 5'-monophosphate (OMP) to uridine 5'-monophosphate (UMP). This Campylobacter jejuni subsp. jejuni serotype O:6 (strain 81116 / NCTC 11828) protein is Orotidine 5'-phosphate decarboxylase.